We begin with the raw amino-acid sequence, 171 residues long: Protein-export protein SecB (171 aa).

This sequence belongs to the SecB family. Homotetramer, a dimer of dimers. One homotetramer interacts with 1 SecA dimer.

It localises to the cytoplasm. One of the proteins required for the normal export of preproteins out of the cell cytoplasm. It is a molecular chaperone that binds to a subset of precursor proteins, maintaining them in a translocation-competent state. It also specifically binds to its receptor SecA. This Histophilus somni (strain 2336) (Haemophilus somnus) protein is Protein-export protein SecB.